Here is a 243-residue protein sequence, read N- to C-terminus: Sugar fermentation stimulation protein homolog (243 aa).

Belongs to the SfsA family.

This chain is Sugar fermentation stimulation protein homolog, found in Bdellovibrio bacteriovorus (strain ATCC 15356 / DSM 50701 / NCIMB 9529 / HD100).